Consider the following 205-residue polypeptide: Guanylyl cyclase-activating protein 1 (205 aa).

Residue G2 is the site of N-myristoyl glycine attachment. N3 bears the Deamidated asparagine mark. EF-hand domains follow at residues 30 to 48 (SGQL…KNLS), 50 to 85 (ASNQ…VLKG), 86 to 121 (KVEQ…IRAI), and 129 to 164 (TAEE…DELL). 15 residues coordinate Ca(2+): D63, N65, D67, Y69, E74, D99, D101, N103, C105, E110, D142, N144, D146, E148, and E153.

Retina.

In terms of biological role, regulatory protein that inhibits guanylyl cyclase when free calcium ions concentration is elevated. This Ca(2+)-sensitive regulation of retinal guanylyl cyclase is a key event in recovery of the dark state of rod photoreceptors following light exposure. In Lithobates pipiens (Northern leopard frog), this protein is Guanylyl cyclase-activating protein 1 (GUCA1A).